A 174-amino-acid polypeptide reads, in one-letter code: Flavodoxin (174 aa).

The Flavodoxin-like domain occupies 4–165 (VGLFYGSDTG…RVEKWCKQIY (162 aa)).

It belongs to the flavodoxin family. The cofactor is FMN.

Low-potential electron donor to a number of redox enzymes. This is Flavodoxin (fldA) from Haemophilus influenzae (strain ATCC 51907 / DSM 11121 / KW20 / Rd).